The following is a 568-amino-acid chain: MDQDAFFSERDPEAEGETPRKQESLSDVIGLLDVVLSYKPTEIGEDRSWLHSIIDNSKENKPSCKADDNNKDRAISTPTQDHRSSEESGISRRTGESKTETHARILDQQGIHRASRRGTSPNPLPENMGNERNTRIDEDSPNERRHQRSVPTDEDRKMAENSNKREEDQVEGFPEEVRRGTPLSDDREGRTNNNGRSMETSSTHSTRITDVITNPSPELEDAVLQRNKRRPTTIKRSQTRSERTQNSELHKSTSEDSSNLEDHNTKTSPKVLPSKNEESVATQKNNHNHRKTKYTTNNANNNTKSLPTPEHDTTANEEGTSNTSVDEMAKLLVSLGVIKSQHEFELSRSASHVFAKRMLKSANYKEMTFNLCGMLLSVEKSLENKVEENRTLLKQIQEEIDSSRDLHKRFSEYQKEQNSLMMANLSTLHIITDRGGKTGDPSDTTRSPSVFTKGKDNKVKKTRFDPSMEALGGQEFKPDLIREDELRDDIRNPVLEEHNNEPQASNASRLIPSTEKHTLHSLKLVIENSPLSRVEKKAYIKSLYKCRTNQEVKNVMELFEEDIDSLTN.

Residues 1–25 (MDQDAFFSERDPEAEGETPRKQESL) are disordered. The span at 7–24 (FSERDPEAEGETPRKQES) shows a compositional bias: basic and acidic residues. The interval 33-41 (DVVLSYKPT) is N0 binding. The segment at 55–322 (DNSKENKPSC…TTANEEGTSN (268 aa)) is disordered. Composition is skewed to basic and acidic residues over residues 56–105 (NSKE…HARI), 132–144 (RNTR…PNER), 151–167 (PTDE…KREE), and 175–190 (EEVR…REGR). Residues 191 to 216 (TNNNGRSMETSSTHSTRITDVITNPS) are compositionally biased toward polar residues. Basic and acidic residues predominate over residues 239–265 (TRSERTQNSELHKSTSEDSSNLEDHNT). Residues 294–304 (YTTNNANNNTK) are compositionally biased toward low complexity. Residues 344–411 (FELSRSASHV…SSRDLHKRFS (68 aa)) form a multimerization region. A coiled-coil region spans residues 387–416 (EENRTLLKQIQEEIDSSRDLHKRFSEYQKE). Positions 412–445 (EYQKEQNSLMMANLSTLHIITDRGGKTGDPSDTT) are l protein binding. Disordered regions lie at residues 434–455 (RGGK…TKGK) and 494–513 (VLEE…LIPS). Residues 441–450 (PSDTTRSPSV) show a composition bias toward polar residues. An interaction with the nucleocapsid (N-RNA) region spans residues 479–568 (DLIREDELRD…FEEDIDSLTN (90 aa)).

The protein belongs to the respirovirus P protein family. As to quaternary structure, homotetramer. Interacts (via multimerization domain) with polymerase L; this interaction forms the polymerase complex. Interacts (via N-terminus) with N0; this interaction allows P to chaperon N0 before encapsidation and form the N-P complex. Interacts (via C-terminus) with N-RNA template; this interaction positions the polymerase on the template.

Essential cofactor of the RNA polymerase L that plays a central role in the transcription and replication by forming the polymerase complex with RNA polymerase L and recruiting L to the genomic N-RNA template for RNA synthesis. Also plays a central role in the encapsidation of nascent RNA chains by forming the encapsidation complex with the nucleocapsid protein N (N-P complex). Acts as a chaperone for newly synthesized free N protein, so-called N0, allowing encapsidation of nascent RNA chains during replication. The nucleoprotein protein N prevents excessive phosphorylation of P, which leads to down-regulation of viral transcription/ replication. Participates, together with N, in the formation of viral factories (viroplasms), which are large inclusions in the host cytoplasm where replication takes place. Recruits host PI4KB and remodel the host endoplasmic reticulum membrane to form viral replication factories. The sequence is that of Phosphoprotein (P/C) from Human parainfluenza 1 virus (strain CI-5/73) (HPIV-1).